The following is a 394-amino-acid chain: Zinc finger and SCAN domain-containing protein 9 (394 aa).

Lys-26 participates in a covalent cross-link: Glycyl lysine isopeptide (Lys-Gly) (interchain with G-Cter in SUMO2). Residues 52 to 134 (RRHFRQLCYQ…ILLEDLEREL (83 aa)) form the SCAN box domain. Glycyl lysine isopeptide (Lys-Gly) (interchain with G-Cter in SUMO2) cross-links involve residues Lys-215 and Lys-238. C2H2-type zinc fingers lie at residues 254-276 (HKCD…QRIH), 282-304 (YECN…RGIH), 310-332 (YHCK…QRIH), 338-360 (YQCS…QRSH), and 366-388 (HQCI…QKIH).

The protein belongs to the krueppel C2H2-type zinc-finger protein family.

The protein localises to the nucleus. In terms of biological role, may be involved in transcriptional regulation. The chain is Zinc finger and SCAN domain-containing protein 9 (ZSCAN9) from Homo sapiens (Human).